The sequence spans 657 residues: Methionine--tRNA ligase (657 aa).

Residues 13-23 carry the 'HIGH' region motif; that stretch reads YYPSGNLHIGH. Residues 308–312 carry the 'KMSKS' region motif; the sequence is KMSKS. Lys-311 is an ATP binding site. In terms of domain architecture, tRNA-binding spans 557–657; that stretch reads DFDKVEIKAA…SAIPNGAVIK (101 aa).

This sequence belongs to the class-I aminoacyl-tRNA synthetase family. MetG type 2B subfamily. As to quaternary structure, homodimer.

The protein localises to the cytoplasm. It carries out the reaction tRNA(Met) + L-methionine + ATP = L-methionyl-tRNA(Met) + AMP + diphosphate. Its function is as follows. Is required not only for elongation of protein synthesis but also for the initiation of all mRNA translation through initiator tRNA(fMet) aminoacylation. The polypeptide is Methionine--tRNA ligase (Staphylococcus aureus (strain MRSA252)).